Consider the following 141-residue polypeptide: Galactose-6-phosphate isomerase subunit LacA (141 aa).

Belongs to the LacAB/RpiB family. Heteromultimeric protein consisting of LacA and LacB.

It catalyses the reaction aldehydo-D-galactose 6-phosphate = keto-D-tagatose 6-phosphate. The protein operates within carbohydrate metabolism; D-galactose 6-phosphate degradation; D-tagatose 6-phosphate from D-galactose 6-phosphate: step 1/1. The chain is Galactose-6-phosphate isomerase subunit LacA from Streptococcus pneumoniae (strain ATCC 700669 / Spain 23F-1).